An 842-amino-acid chain; its full sequence is Oleate activated transcription factor 3 (842 aa).

Residues 22–50 constitute a DNA-binding region (zn(2)-C6 fungal-type); that stretch reads CTNCKRRKSKCDRQNPCSNCVRFGNKDTC. Residues 55-101 form a disordered region; it reads NPKNTESQHGEDTDNKVKKQQPQMIKGKRNGTSSSIVGSKASSISPT. A compositionally biased stretch (basic and acidic residues) spans 60-71; sequence ESQHGEDTDNKV. A compositionally biased stretch (low complexity) spans 87-99; that stretch reads SSSIVGSKASSIS.

Belongs to the OAF3 family.

Its subcellular location is the cytoplasm. The protein resides in the nucleus. The protein localises to the mitochondrion. Functionally, transcriptional inhibitor with a significantly increased number of target genes in response to oleate. This chain is Oleate activated transcription factor 3 (OAF3), found in Zygosaccharomyces rouxii (strain ATCC 2623 / CBS 732 / NBRC 1130 / NCYC 568 / NRRL Y-229).